Consider the following 205-residue polypeptide: Holliday junction branch migration complex subunit RuvA (205 aa).

A domain I region spans residues 1–64 (MIGKLKGLID…EDQIKLFGFR (64 aa)). Residues 65–143 (SDVEREWFRL…AFADVDPGVI (79 aa)) are domain II. Positions 144–154 (RLSGAIEDSRA) are flexible linker. Residues 154 to 205 (APQPIADAISALINLGYGQPQAAAAIAAASRAAGDKAETAQLIRLGLKELAK) form a domain III region.

It belongs to the RuvA family. Homotetramer. Forms an RuvA(8)-RuvB(12)-Holliday junction (HJ) complex. HJ DNA is sandwiched between 2 RuvA tetramers; dsDNA enters through RuvA and exits via RuvB. An RuvB hexamer assembles on each DNA strand where it exits the tetramer. Each RuvB hexamer is contacted by two RuvA subunits (via domain III) on 2 adjacent RuvB subunits; this complex drives branch migration. In the full resolvosome a probable DNA-RuvA(4)-RuvB(12)-RuvC(2) complex forms which resolves the HJ.

Its subcellular location is the cytoplasm. Its function is as follows. The RuvA-RuvB-RuvC complex processes Holliday junction (HJ) DNA during genetic recombination and DNA repair, while the RuvA-RuvB complex plays an important role in the rescue of blocked DNA replication forks via replication fork reversal (RFR). RuvA specifically binds to HJ cruciform DNA, conferring on it an open structure. The RuvB hexamer acts as an ATP-dependent pump, pulling dsDNA into and through the RuvAB complex. HJ branch migration allows RuvC to scan DNA until it finds its consensus sequence, where it cleaves and resolves the cruciform DNA. The protein is Holliday junction branch migration complex subunit RuvA of Bradyrhizobium sp. (strain BTAi1 / ATCC BAA-1182).